We begin with the raw amino-acid sequence, 286 residues long: Bifunctional protein FolD 2 (286 aa).

NADP(+) contacts are provided by residues 165 to 167 (GRG), Thr-192, and Ile-233.

The protein belongs to the tetrahydrofolate dehydrogenase/cyclohydrolase family. As to quaternary structure, homodimer.

It catalyses the reaction (6R)-5,10-methylene-5,6,7,8-tetrahydrofolate + NADP(+) = (6R)-5,10-methenyltetrahydrofolate + NADPH. It carries out the reaction (6R)-5,10-methenyltetrahydrofolate + H2O = (6R)-10-formyltetrahydrofolate + H(+). It functions in the pathway one-carbon metabolism; tetrahydrofolate interconversion. Catalyzes the oxidation of 5,10-methylenetetrahydrofolate to 5,10-methenyltetrahydrofolate and then the hydrolysis of 5,10-methenyltetrahydrofolate to 10-formyltetrahydrofolate. The protein is Bifunctional protein FolD 2 of Salinispora arenicola (strain CNS-205).